The sequence spans 118 residues: Small ribosomal subunit protein bS6 (118 aa).

Belongs to the bacterial ribosomal protein bS6 family.

Functionally, binds together with bS18 to 16S ribosomal RNA. The protein is Small ribosomal subunit protein bS6 of Parabacteroides distasonis (strain ATCC 8503 / DSM 20701 / CIP 104284 / JCM 5825 / NCTC 11152).